Here is a 190-residue protein sequence, read N- to C-terminus: UPF0301 protein Pden_0436 (190 aa).

It belongs to the UPF0301 (AlgH) family.

The protein is UPF0301 protein Pden_0436 of Paracoccus denitrificans (strain Pd 1222).